An 85-amino-acid chain; its full sequence is Toxin Cll7 (85 aa).

The N-terminal stretch at 1-19 (MNSLLMITACLVLFGTVWA) is a signal peptide. An LCN-type CS-alpha/beta domain is found at 20 to 83 (KEGYLVNTYT…TWPLPNKTCG (64 aa)). 4 disulfides stabilise this stretch: Cys-31–Cys-82, Cys-35–Cys-58, Cys-44–Cys-63, and Cys-48–Cys-65.

This sequence belongs to the long (4 C-C) scorpion toxin superfamily. Sodium channel inhibitor family. Beta subfamily. As to expression, expressed by the venom gland.

The protein localises to the secreted. Functionally, beta toxins bind voltage-independently at site-4 of sodium channels (Nav) and shift the voltage of activation toward more negative potentials thereby affecting sodium channel activation and promoting spontaneous and repetitive firing. The sequence is that of Toxin Cll7 from Centruroides limpidus (Mexican scorpion).